Reading from the N-terminus, the 340-residue chain is 4-hydroxy-3-methylbut-2-enyl diphosphate reductase (340 aa).

C19 is a [4Fe-4S] cluster binding site. Residues H50 and H90 each coordinate (2E)-4-hydroxy-3-methylbut-2-enyl diphosphate. Dimethylallyl diphosphate-binding residues include H50 and H90. Isopentenyl diphosphate is bound by residues H50 and H90. C112 is a binding site for [4Fe-4S] cluster. H141 provides a ligand contact to (2E)-4-hydroxy-3-methylbut-2-enyl diphosphate. Dimethylallyl diphosphate is bound at residue H141. H141 serves as a coordination point for isopentenyl diphosphate. Catalysis depends on E143, which acts as the Proton donor. T190 serves as a coordination point for (2E)-4-hydroxy-3-methylbut-2-enyl diphosphate. Position 220 (C220) interacts with [4Fe-4S] cluster. (2E)-4-hydroxy-3-methylbut-2-enyl diphosphate is bound by residues S248, S249, N250, and S292. Residues S248, S249, N250, and S292 each contribute to the dimethylallyl diphosphate site. Isopentenyl diphosphate contacts are provided by S248, S249, N250, and S292.

This sequence belongs to the IspH family. It depends on [4Fe-4S] cluster as a cofactor.

It carries out the reaction isopentenyl diphosphate + 2 oxidized [2Fe-2S]-[ferredoxin] + H2O = (2E)-4-hydroxy-3-methylbut-2-enyl diphosphate + 2 reduced [2Fe-2S]-[ferredoxin] + 2 H(+). The catalysed reaction is dimethylallyl diphosphate + 2 oxidized [2Fe-2S]-[ferredoxin] + H2O = (2E)-4-hydroxy-3-methylbut-2-enyl diphosphate + 2 reduced [2Fe-2S]-[ferredoxin] + 2 H(+). The protein operates within isoprenoid biosynthesis; dimethylallyl diphosphate biosynthesis; dimethylallyl diphosphate from (2E)-4-hydroxy-3-methylbutenyl diphosphate: step 1/1. Its pathway is isoprenoid biosynthesis; isopentenyl diphosphate biosynthesis via DXP pathway; isopentenyl diphosphate from 1-deoxy-D-xylulose 5-phosphate: step 6/6. Functionally, catalyzes the conversion of 1-hydroxy-2-methyl-2-(E)-butenyl 4-diphosphate (HMBPP) into a mixture of isopentenyl diphosphate (IPP) and dimethylallyl diphosphate (DMAPP). Acts in the terminal step of the DOXP/MEP pathway for isoprenoid precursor biosynthesis. The polypeptide is 4-hydroxy-3-methylbut-2-enyl diphosphate reductase (Thermus thermophilus (strain ATCC BAA-163 / DSM 7039 / HB27)).